Consider the following 282-residue polypeptide: Dof zinc finger protein 4 (282 aa).

The Dof-type zinc finger occupies 45 to 99; that stretch reads VKCPRCESTNTKFCYYNNYNLSQPRHFCKSCRRYWTKGGVLRNVPVGGGCRKTKR. Residues C47, C50, C72, and C75 each coordinate Zn(2+). The interval 89–161 is disordered; it reads PVGGGCRKTK…TTPATPSSNT (73 aa). 2 stretches are compositionally biased toward low complexity: residues 102 to 117 and 125 to 161; these read SSSA…TAAT and RASA…SSNT.

It localises to the nucleus. Functionally, transcription factor that may transactivate seed storage protein genes in developing seeds. This chain is Dof zinc finger protein 4, found in Oryza sativa subsp. japonica (Rice).